The following is a 205-amino-acid chain: Large ribosomal subunit protein uL4 (205 aa).

A disordered region spans residues 47-70 (TRAQKSRAEVSGGGKKPFRQKGTG).

Belongs to the universal ribosomal protein uL4 family. As to quaternary structure, part of the 50S ribosomal subunit.

Functionally, one of the primary rRNA binding proteins, this protein initially binds near the 5'-end of the 23S rRNA. It is important during the early stages of 50S assembly. It makes multiple contacts with different domains of the 23S rRNA in the assembled 50S subunit and ribosome. Forms part of the polypeptide exit tunnel. The protein is Large ribosomal subunit protein uL4 of Acinetobacter baylyi (strain ATCC 33305 / BD413 / ADP1).